Consider the following 232-residue polypeptide: Lipoprotein-releasing system ATP-binding protein LolD (232 aa).

An ABC transporter domain is found at Ile-11–Tyr-232. An ATP-binding site is contributed by Gly-47–Ser-54.

Belongs to the ABC transporter superfamily. Lipoprotein translocase (TC 3.A.1.125) family. The complex is composed of two ATP-binding proteins (LolD) and two transmembrane proteins (LolC and LolE).

The protein localises to the cell inner membrane. Its function is as follows. Part of the ABC transporter complex LolCDE involved in the translocation of mature outer membrane-directed lipoproteins, from the inner membrane to the periplasmic chaperone, LolA. Responsible for the formation of the LolA-lipoprotein complex in an ATP-dependent manner. The sequence is that of Lipoprotein-releasing system ATP-binding protein LolD from Zymomonas mobilis subsp. mobilis (strain ATCC 10988 / DSM 424 / LMG 404 / NCIMB 8938 / NRRL B-806 / ZM1).